The primary structure comprises 506 residues: Maturase K (506 aa).

This sequence belongs to the intron maturase 2 family. MatK subfamily.

Its subcellular location is the plastid. It localises to the chloroplast. Functionally, usually encoded in the trnK tRNA gene intron. Probably assists in splicing its own and other chloroplast group II introns. The protein is Maturase K of Trifolium fragiferum (Strawberry clover).